The chain runs to 356 residues: Uroporphyrinogen decarboxylase (356 aa).

Residues 27 to 31 (RQAGR), Asp-77, Tyr-154, Thr-209, and His-327 contribute to the substrate site.

The protein belongs to the uroporphyrinogen decarboxylase family. As to quaternary structure, homodimer.

Its subcellular location is the cytoplasm. The enzyme catalyses uroporphyrinogen III + 4 H(+) = coproporphyrinogen III + 4 CO2. It participates in porphyrin-containing compound metabolism; protoporphyrin-IX biosynthesis; coproporphyrinogen-III from 5-aminolevulinate: step 4/4. In terms of biological role, catalyzes the decarboxylation of four acetate groups of uroporphyrinogen-III to yield coproporphyrinogen-III. The chain is Uroporphyrinogen decarboxylase from Hahella chejuensis (strain KCTC 2396).